A 274-amino-acid chain; its full sequence is Large ribosomal subunit protein uL2 (274 aa).

Positions 223–258 (VAMNPVDHPHGGGEGRTSGGRHPVTPWGIPTKGYKT) are disordered.

This sequence belongs to the universal ribosomal protein uL2 family. In terms of assembly, part of the 50S ribosomal subunit. Forms a bridge to the 30S subunit in the 70S ribosome.

In terms of biological role, one of the primary rRNA binding proteins. Required for association of the 30S and 50S subunits to form the 70S ribosome, for tRNA binding and peptide bond formation. It has been suggested to have peptidyltransferase activity; this is somewhat controversial. Makes several contacts with the 16S rRNA in the 70S ribosome. The chain is Large ribosomal subunit protein uL2 from Geotalea daltonii (strain DSM 22248 / JCM 15807 / FRC-32) (Geobacter daltonii).